A 285-amino-acid polypeptide reads, in one-letter code: 2-dehydro-3-deoxyphosphooctonate aldolase (285 aa).

Belongs to the KdsA family.

It is found in the cytoplasm. The enzyme catalyses D-arabinose 5-phosphate + phosphoenolpyruvate + H2O = 3-deoxy-alpha-D-manno-2-octulosonate-8-phosphate + phosphate. It participates in carbohydrate biosynthesis; 3-deoxy-D-manno-octulosonate biosynthesis; 3-deoxy-D-manno-octulosonate from D-ribulose 5-phosphate: step 2/3. It functions in the pathway bacterial outer membrane biogenesis; lipopolysaccharide biosynthesis. This chain is 2-dehydro-3-deoxyphosphooctonate aldolase, found in Delftia acidovorans (strain DSM 14801 / SPH-1).